We begin with the raw amino-acid sequence, 539 residues long: GMP synthase [glutamine-hydrolyzing] (539 aa).

The region spanning 4 to 202 is the Glutamine amidotransferase type-1 domain; the sequence is KILILDFGSQ…VLGIAGCKPD (199 aa). Cysteine 81 acts as the Nucleophile in catalysis. Catalysis depends on residues histidine 176 and glutamate 178. Residues 203–395 form the GMPS ATP-PPase domain; sequence WVMRDHIEEA…LGLPPEMVYR (193 aa). 230–236 contributes to the ATP binding site; sequence SGGVDSS.

In terms of assembly, homodimer.

It catalyses the reaction XMP + L-glutamine + ATP + H2O = GMP + L-glutamate + AMP + diphosphate + 2 H(+). The protein operates within purine metabolism; GMP biosynthesis; GMP from XMP (L-Gln route): step 1/1. Functionally, catalyzes the synthesis of GMP from XMP. The sequence is that of GMP synthase [glutamine-hydrolyzing] from Cupriavidus necator (strain ATCC 17699 / DSM 428 / KCTC 22496 / NCIMB 10442 / H16 / Stanier 337) (Ralstonia eutropha).